Consider the following 1260-residue polypeptide: uncharacterized protein (1260 aa).

This sequence belongs to the oxoprolinase family.

This is an uncharacterized protein from Schizosaccharomyces pombe (strain 972 / ATCC 24843) (Fission yeast).